A 522-amino-acid polypeptide reads, in one-letter code: 56 kDa type-specific antigen (522 aa).

The signal sequence occupies residues 1 to 22 (MKKIMLIASAMSALSLPFSASA). A helical transmembrane segment spans residues 67–87 (LTTMLPFGGTLAAGMTIAPGF). The segment at 385 to 417 (AQEEGDDQSQVSCNDKKQQAVAEDSKAGSSKEG) is disordered. Residues 398-417 (NDKKQQAVAEDSKAGSSKEG) are compositionally biased toward basic and acidic residues. The helical transmembrane segment at 470-490 (IGVVASGVLGVAINVADGVCV) threads the bilayer.

It is found in the cell membrane. Its function is as follows. May be an adherent factor for rickettsial adsorption to the host-cell surface and a determinant of virulence of individual rickettsial strain. It is the major outer membrane protein. In Orientia tsutsugamushi (Rickettsia tsutsugamushi), this protein is 56 kDa type-specific antigen.